The sequence spans 309 residues: S-antigen protein (309 aa).

Positions 1–23 are cleaved as a signal peptide; the sequence is MNRILSVSFYLFFLYLYIYKTYG. Positions 52–309 are disordered; sequence GKGNKYEDLQ…KSIMNMLILM (258 aa). Positions 60–86 are enriched in acidic residues; the sequence is LQEEGEGENDDEEHSNSEESDNDEENE. Residues 93-259 are compositionally biased toward basic and acidic residues; sequence EAPKSDEAEA…DEAEARKSEA (167 aa). The interval 97–256 is 20 X 8 AA approximate tandem repeats of A-[RL]-K-S-D-E-A-E; that stretch reads SDEAEALKSD…RKSDEAEARK (160 aa). 2 consecutive repeat copies span residues 257–271 and 272–286. Positions 257-286 are 2 X 15 AA tandem repeats of S-E-A-G-T-E-G-P-K-G-T-G-G-P-G; that stretch reads SEAGTEGPKGTGGPGSEAGTEGPKGTGGPG. The segment covering 263 to 289 has biased composition (gly residues); the sequence is GPKGTGGPGSEAGTEGPKGTGGPGSGG.

The protein localises to the parasitophorous vacuole. In terms of biological role, s antigens are soluble heat-stable proteins present in the sera of some infected individuals. The polypeptide is S-antigen protein (Plasmodium falciparum (isolate NF7 / Ghana)).